Consider the following 395-residue polypeptide: Elongation factor Tu (395 aa).

Residues 10 to 204 (KPHLNIGTIG…AVDNWIEEPV (195 aa)) form the tr-type G domain. The tract at residues 19–26 (GHVDHGKT) is G1. 19 to 26 (GHVDHGKT) is a GTP binding site. Thr26 contributes to the Mg(2+) binding site. The G2 stretch occupies residues 60 to 64 (GITIN). Residues 81 to 84 (DCPG) are G3. Residues 81–85 (DCPGH) and 136–139 (NKVD) each bind GTP. Residues 136 to 139 (NKVD) are G4. Residues 174–176 (SAL) form a G5 region.

This sequence belongs to the TRAFAC class translation factor GTPase superfamily. Classic translation factor GTPase family. EF-Tu/EF-1A subfamily. In terms of assembly, monomer.

It is found in the cytoplasm. It catalyses the reaction GTP + H2O = GDP + phosphate + H(+). GTP hydrolase that promotes the GTP-dependent binding of aminoacyl-tRNA to the A-site of ribosomes during protein biosynthesis. The chain is Elongation factor Tu from Flavobacterium johnsoniae (strain ATCC 17061 / DSM 2064 / JCM 8514 / BCRC 14874 / CCUG 350202 / NBRC 14942 / NCIMB 11054 / UW101) (Cytophaga johnsonae).